The following is a 404-amino-acid chain: MKIPIYMDYHATTPVDPRVLEAMLPYFTTEYGNAASKSHAFGWKAEEAVEAAREEVAKLIGASAKEIVWTSGATESDNLAVKGAAHFYQAKGKHLVTCKTEHKAVLDSMHALERQGFEVTFLEPERDGRLDPAKVKAALRPDTILVSVMHANNETGVVHPIAEIGRIAREAGVVFHCDAVQSIGKIPFDVEAMNVDLASISAHKMYGPKGMGALYVRRKPRVRLVAEMDGGGHERGFRSGTLNVPGIVGMGKAAELARLERDAEAVRVTALRERLRKGLEKELDLLTVNGSLEHRVPGNLNVSFAYVEGEALMMAVKDVAVSSGSACTSASLEPSYVLRAMGVSEDLAHSSIRFGLGRFSTEEEVDYAIRLFGEKVRKLREMSPLYEMVKDGVDLNQIEWANPH.

Pyridoxal 5'-phosphate contacts are provided by residues 73–74, Asn153, Gln181, and 201–203; these read AT and SAH. Lys204 carries the N6-(pyridoxal phosphate)lysine modification. Pyridoxal 5'-phosphate is bound at residue Thr241. Cys327 (cysteine persulfide intermediate) is an active-site residue. Residue Cys327 participates in [2Fe-2S] cluster binding.

It belongs to the class-V pyridoxal-phosphate-dependent aminotransferase family. NifS/IscS subfamily. As to quaternary structure, homodimer. Forms a heterotetramer with IscU, interacts with other sulfur acceptors. Pyridoxal 5'-phosphate serves as cofactor.

Its subcellular location is the cytoplasm. The enzyme catalyses (sulfur carrier)-H + L-cysteine = (sulfur carrier)-SH + L-alanine. Its pathway is cofactor biosynthesis; iron-sulfur cluster biosynthesis. Functionally, master enzyme that delivers sulfur to a number of partners involved in Fe-S cluster assembly, tRNA modification or cofactor biosynthesis. Catalyzes the removal of elemental sulfur atoms from cysteine to produce alanine. Functions as a sulfur delivery protein for Fe-S cluster synthesis onto IscU, an Fe-S scaffold assembly protein, as well as other S acceptor proteins. This is Cysteine desulfurase IscS from Anaeromyxobacter sp. (strain K).